We begin with the raw amino-acid sequence, 98 residues long: Derivative of benzaldehyde biosynthesis cluster protein C (98 aa).

It belongs to the YciI family.

The protein operates within secondary metabolite biosynthesis. Functionally, part of the gene cluster that mediates the biosynthesis of the antibiotic 2,4-dihydroxy-3-methyl-6-(2-oxopropyl)benzaldehyde (DHMBA) and its derivatives. The direct non-reducing polyketide synthase dbaI product is 2,4-dihydroxy-3-methyl-6-(2-oxopropyl)benzaldehyde (DHMBA), produced by condensation of one acetyl-CoA starter unit with 4 malonyl-CoA units and one methylation step. The FAD-dependent monooxygenase dbaH is responsible for the synthesis of yellow pigments derived from the oxidation of DHMBA. The roles of dbaB, C, E and F have still to be determined. The protein is Derivative of benzaldehyde biosynthesis cluster protein C of Emericella nidulans (strain FGSC A4 / ATCC 38163 / CBS 112.46 / NRRL 194 / M139) (Aspergillus nidulans).